Here is a 116-residue protein sequence, read N- to C-terminus: NADPH-dependent 7-cyano-7-deazaguanine reductase (116 aa).

Cys-31 serves as the catalytic Thioimide intermediate. The active-site Proton donor is the Asp-38. Residues 53-55 (VEL) and 72-73 (YE) each bind substrate.

The protein belongs to the GTP cyclohydrolase I family. QueF type 1 subfamily.

The protein resides in the cytoplasm. The catalysed reaction is 7-aminomethyl-7-carbaguanine + 2 NADP(+) = 7-cyano-7-deazaguanine + 2 NADPH + 3 H(+). The protein operates within tRNA modification; tRNA-queuosine biosynthesis. Its function is as follows. Catalyzes the NADPH-dependent reduction of 7-cyano-7-deazaguanine (preQ0) to 7-aminomethyl-7-deazaguanine (preQ1). The chain is NADPH-dependent 7-cyano-7-deazaguanine reductase from Chlorobium chlorochromatii (strain CaD3).